A 103-amino-acid polypeptide reads, in one-letter code: MKNQKIRIRLKAFDYKLIDQSAAEIVDTAKRTGAVVRGPVPLPTRIRRYDVLRSPHVNKSSRDQFEIRTHQRLMDIVDPTDKTVDALMRLDLPAGVDVEIALQ.

It belongs to the universal ribosomal protein uS10 family. In terms of assembly, part of the 30S ribosomal subunit.

Its function is as follows. Involved in the binding of tRNA to the ribosomes. The sequence is that of Small ribosomal subunit protein uS10 from Bordetella petrii (strain ATCC BAA-461 / DSM 12804 / CCUG 43448).